The sequence spans 328 residues: Flap endonuclease 1 (328 aa).

An N-domain region spans residues 1-98; it reads MGVKLRDVVS…ETVSRRADIR (98 aa). Mg(2+) contacts are provided by Asp27, Asp80, Glu152, Glu154, Asp173, Asp175, and Asp226. Positions 116–247 are I-domain; sequence RAKKYAVRSS…RGLKLIREKG (132 aa). The interval 320 to 328 is interaction with PCNA; it reads TQKSLEDWF.

It belongs to the XPG/RAD2 endonuclease family. FEN1 subfamily. In terms of assembly, interacts with PCNA. PCNA stimulates the nuclease activity without altering cleavage specificity. Mg(2+) is required as a cofactor.

In terms of biological role, structure-specific nuclease with 5'-flap endonuclease and 5'-3' exonuclease activities involved in DNA replication and repair. During DNA replication, cleaves the 5'-overhanging flap structure that is generated by displacement synthesis when DNA polymerase encounters the 5'-end of a downstream Okazaki fragment. Binds the unpaired 3'-DNA end and kinks the DNA to facilitate 5' cleavage specificity. Cleaves one nucleotide into the double-stranded DNA from the junction in flap DNA, leaving a nick for ligation. Also involved in the base excision repair (BER) pathway. Acts as a genome stabilization factor that prevents flaps from equilibrating into structures that lead to duplications and deletions. Also possesses 5'-3' exonuclease activity on nicked or gapped double-stranded DNA. The chain is Flap endonuclease 1 from Methanothermobacter thermautotrophicus (strain ATCC 29096 / DSM 1053 / JCM 10044 / NBRC 100330 / Delta H) (Methanobacterium thermoautotrophicum).